The chain runs to 927 residues: Probable RNA-dependent RNA polymerase 4 (927 aa).

The disordered stretch occupies residues 98-135; sequence GESPVQFPRTPGKKSCRASQAEVSLDREDPSPKFLRGD. Over residues 121–135 the composition is skewed to basic and acidic residues; it reads SLDREDPSPKFLRGD.

It belongs to the RdRP family.

It carries out the reaction RNA(n) + a ribonucleoside 5'-triphosphate = RNA(n+1) + diphosphate. Functionally, probably involved in the RNA silencing pathway and required for the generation of small interfering RNAs (siRNAs). This chain is Probable RNA-dependent RNA polymerase 4 (RDR4), found in Arabidopsis thaliana (Mouse-ear cress).